The following is a 959-amino-acid chain: Translation initiation factor IF-2 (959 aa).

The span at 1–10 (MSDKTNDDKT) shows a compositional bias: basic and acidic residues. The segment at 1-374 (MSDKTNDDKT…SQMQETREKI (374 aa)) is disordered. Residues 27–37 (EQSTVRQNFSH) show a composition bias toward polar residues. Low complexity-rich tracts occupy residues 63–118 (AAAA…VTKP) and 128–138 (QRPGGQQAQRP). 2 stretches are compositionally biased toward basic and acidic residues: residues 154-225 (SEMD…EAAK) and 232-241 (ARSERRDDAR). Residues 246-284 (GARPQQAGRPQGGRPQPAGRPQQGSPRPAPIIADAAPIA) are compositionally biased toward low complexity. Residues 318–333 (PEVRAPKVVKGEDDRR) show a composition bias toward basic and acidic residues. Positions 457-626 (SRPPVVTIMG…LLQAEMLDLK (170 aa)) constitute a tr-type G domain. The tract at residues 466–473 (GHVDHGKT) is G1. Residue 466-473 (GHVDHGKT) coordinates GTP. Residues 491–495 (GITQH) form a G2 region. Residues 512–515 (DTPG) form a G3 region. GTP contacts are provided by residues 512–516 (DTPGH) and 566–569 (NKID). Residues 566–569 (NKID) form a G4 region. A G5 region spans residues 602–604 (SAK).

This sequence belongs to the TRAFAC class translation factor GTPase superfamily. Classic translation factor GTPase family. IF-2 subfamily.

The protein resides in the cytoplasm. Functionally, one of the essential components for the initiation of protein synthesis. Protects formylmethionyl-tRNA from spontaneous hydrolysis and promotes its binding to the 30S ribosomal subunits. Also involved in the hydrolysis of GTP during the formation of the 70S ribosomal complex. In Brucella melitensis biotype 1 (strain ATCC 23456 / CCUG 17765 / NCTC 10094 / 16M), this protein is Translation initiation factor IF-2.